A 757-amino-acid polypeptide reads, in one-letter code: Endonuclease MutS2 (757 aa).

An ATP-binding site is contributed by Gly321–Thr328. Positions Ile681–Lys756 constitute a Smr domain.

Belongs to the DNA mismatch repair MutS family. MutS2 subfamily. In terms of assembly, homodimer. Binds to stalled ribosomes, contacting rRNA.

In terms of biological role, endonuclease that is involved in the suppression of homologous recombination and thus may have a key role in the control of bacterial genetic diversity. Functionally, acts as a ribosome collision sensor, splitting the ribosome into its 2 subunits. Detects stalled/collided 70S ribosomes which it binds and splits by an ATP-hydrolysis driven conformational change. Acts upstream of the ribosome quality control system (RQC), a ribosome-associated complex that mediates the extraction of incompletely synthesized nascent chains from stalled ribosomes and their subsequent degradation. Probably generates substrates for RQC. This chain is Endonuclease MutS2, found in Thermotoga petrophila (strain ATCC BAA-488 / DSM 13995 / JCM 10881 / RKU-1).